The primary structure comprises 88 residues: Small ribosomal subunit protein uS15c (88 aa).

It belongs to the universal ribosomal protein uS15 family. Part of the 30S ribosomal subunit.

It is found in the plastid. The protein resides in the chloroplast. The polypeptide is Small ribosomal subunit protein uS15c (rps15) (Lepidium virginicum (Virginia pepperweed)).